We begin with the raw amino-acid sequence, 296 residues long: Malate--CoA ligase subunit alpha (296 aa).

Residues 17-20 (TGDK), K43, and 96-98 (ITD) contribute to the CoA site. The active-site Tele-phosphohistidine intermediate is H251.

It belongs to the succinate/malate CoA ligase alpha subunit family. As to quaternary structure, heterotetramer of two alpha and two beta subunits.

The catalysed reaction is (S)-malate + ATP + CoA = (S)-malyl-CoA + ADP + phosphate. It functions in the pathway one-carbon metabolism; formaldehyde assimilation via serine pathway. The polypeptide is Malate--CoA ligase subunit alpha (mtkB) (Methylorubrum extorquens (strain ATCC 14718 / DSM 1338 / JCM 2805 / NCIMB 9133 / AM1) (Methylobacterium extorquens)).